The primary structure comprises 319 residues: Putative antiporter CaxA (319 aa).

10 helical membrane passes run V3–V23, M38–A58, I81–I101, F105–T125, A127–G147, V175–A195, L208–I228, I250–A270, Y275–G292, and I297–F317.

The protein belongs to the Ca(2+):cation antiporter (CaCA) (TC 2.A.19) family.

The protein resides in the cell membrane. Functionally, confers modest Ca(2+) and Na(+) resistance. The sequence is that of Putative antiporter CaxA (caxA) from Alkalimonas amylolytica.